Consider the following 389-residue polypeptide: Phospho-N-acetylmuramoyl-pentapeptide-transferase (389 aa).

The next 10 helical transmembrane spans lie at 25–45 (RAVMATITALGIGLVCGPWVI), 73–93 (TMGGVLILIGIAVATLLWGDL), 97–117 (FIWIVMLVTFGFGVIGWVDDY), 135–155 (FWQSVIGLFAAVYLAFSVSEA), 190–210 (ISYPLGVWGFIVLTYFVIVGA), 222–242 (GLVIMPVVLVGASLGVFAYVM), 258–278 (GAGELLIFCSAMGGAGLAFLW), 286–306 (VFMGDVGALALGGALGTVAVI), 311–331 (IVLFIMGGIFVAETLSVMLQV), and 366–386 (QVVVRFWIITLMLCLFGLTTL).

This sequence belongs to the glycosyltransferase 4 family. MraY subfamily. It depends on Mg(2+) as a cofactor.

It localises to the cell inner membrane. It carries out the reaction UDP-N-acetyl-alpha-D-muramoyl-L-alanyl-gamma-D-glutamyl-meso-2,6-diaminopimeloyl-D-alanyl-D-alanine + di-trans,octa-cis-undecaprenyl phosphate = di-trans,octa-cis-undecaprenyl diphospho-N-acetyl-alpha-D-muramoyl-L-alanyl-D-glutamyl-meso-2,6-diaminopimeloyl-D-alanyl-D-alanine + UMP. It participates in cell wall biogenesis; peptidoglycan biosynthesis. Catalyzes the initial step of the lipid cycle reactions in the biosynthesis of the cell wall peptidoglycan: transfers peptidoglycan precursor phospho-MurNAc-pentapeptide from UDP-MurNAc-pentapeptide onto the lipid carrier undecaprenyl phosphate, yielding undecaprenyl-pyrophosphoryl-MurNAc-pentapeptide, known as lipid I. The chain is Phospho-N-acetylmuramoyl-pentapeptide-transferase from Burkholderia cenocepacia (strain HI2424).